Here is a 131-residue protein sequence, read N- to C-terminus: uncharacterized protein (131 aa).

The region spanning 14–130 (FLLIYSSLEV…RRLPASFLST (117 aa)) is the MSP domain.

This is an uncharacterized protein from Caenorhabditis elegans.